Consider the following 104-residue polypeptide: Integration host factor subunit beta (104 aa).

A compositionally biased stretch (basic and acidic residues) spans 83–95 (GKEMRERLNRDSG). Residues 83–104 (GKEMRERLNRDSGDDAPTSDTA) are disordered.

The protein belongs to the bacterial histone-like protein family. As to quaternary structure, heterodimer of an alpha and a beta chain.

Its function is as follows. This protein is one of the two subunits of integration host factor, a specific DNA-binding protein that functions in genetic recombination as well as in transcriptional and translational control. This Rhodopseudomonas palustris (strain ATCC BAA-98 / CGA009) protein is Integration host factor subunit beta.